Reading from the N-terminus, the 199-residue chain is Prolactin (199 aa).

Cysteine 4 and cysteine 11 form a disulfide bridge. Serine 26 is modified (phosphoserine). Asparagine 31 carries N-linked (GlcNAc...) asparagine; partial glycosylation. Phosphoserine occurs at positions 34 and 90. Intrachain disulfides connect cysteine 58-cysteine 174 and cysteine 191-cysteine 199.

The protein belongs to the somatotropin/prolactin family. As to quaternary structure, interacts with PRLR.

It is found in the secreted. In terms of biological role, prolactin acts primarily on the mammary gland by promoting lactation. The protein is Prolactin (PRL) of Camelus dromedarius (Dromedary).